Here is a 130-residue protein sequence, read N- to C-terminus: D-ribose pyranase (130 aa).

The active-site Proton donor is the His-20. Residues Asp-28, His-97, and 119 to 121 (YSN) contribute to the substrate site.

The protein belongs to the RbsD / FucU family. RbsD subfamily. Homodecamer.

It is found in the cytoplasm. It carries out the reaction beta-D-ribopyranose = beta-D-ribofuranose. It functions in the pathway carbohydrate metabolism; D-ribose degradation; D-ribose 5-phosphate from beta-D-ribopyranose: step 1/2. Catalyzes the interconversion of beta-pyran and beta-furan forms of D-ribose. In Lacticaseibacillus casei (strain BL23) (Lactobacillus casei), this protein is D-ribose pyranase.